We begin with the raw amino-acid sequence, 442 residues long: Trigger factor (442 aa).

The PPIase FKBP-type domain maps to 165 to 250; sequence DDRVIIDFEG…LQKVMAPELP (86 aa).

Belongs to the FKBP-type PPIase family. Tig subfamily.

Its subcellular location is the cytoplasm. The enzyme catalyses [protein]-peptidylproline (omega=180) = [protein]-peptidylproline (omega=0). In terms of biological role, involved in protein export. Acts as a chaperone by maintaining the newly synthesized protein in an open conformation. Functions as a peptidyl-prolyl cis-trans isomerase. This is Trigger factor from Coxiella burnetii (strain CbuK_Q154) (Coxiella burnetii (strain Q154)).